Here is a 410-residue protein sequence, read N- to C-terminus: MTDNYDVIIAGAGPAGGQAARDLAARGYDVCVLETESEDEFPSRSNKSTAGTFPSTMASFNIPDEVVMNFTDDVVLESPNDHYHRHQPGAVLEFADFKNWLVDEAEADGAEYRFDARVSKPIMEGGEIVGVRYNGDEEVYADIVIDATGPSAPLAKALDLCDLRREKQAIGIEYEFEGMDLAPDGYGDLTDAMMLRLDHDIAPGGYSWIFHTGGDTAKVGVCYIQNEGHRHNAKSGYTIDDYLQYWTESDPRFADAERIAGKQHRGSAHIQLPGRMSTDNFMAIGDTVPTVDPLWGEGIDKCMRSGRVAAATADRALTNSERDTSASELAIYDQLWHDRVAPKVKNRLFMTEMLYRASNERYDKLLEDLHRLPDEQLDAANGGSPLAMFRMLKFEDLSILASTAKDWFSN.

Residues A15, E34, V118, D286, G298, and I299 each coordinate FAD. A 2,3-bis-O-(geranylgeranyl)-sn-glycerol 1-phospholipid contacts are provided by K343 and A379.

It belongs to the geranylgeranyl reductase family. DGGGPL reductase subfamily. Requires FAD as cofactor.

The catalysed reaction is a 2,3-bis-O-phytanyl-sn-glycerol 1-phospholipid + 8 A = a 2,3-bis-O-(geranylgeranyl)-sn-glycerol 1-phospholipid + 8 AH2. The enzyme catalyses 2,3-bis-O-(phytanyl)-sn-glycerol 1-phosphate + 8 A = 2,3-bis-O-(geranylgeranyl)-sn-glycerol 1-phosphate + 8 AH2. It carries out the reaction CDP-2,3-bis-O-(geranylgeranyl)-sn-glycerol + 8 AH2 = CDP-2,3-bis-O-(phytanyl)-sn-glycerol + 8 A. It catalyses the reaction archaetidylserine + 8 AH2 = 2,3-bis-O-phytanyl-sn-glycero-3-phospho-L-serine + 8 A. It participates in membrane lipid metabolism; glycerophospholipid metabolism. Is involved in the reduction of 2,3-digeranylgeranylglycerophospholipids (unsaturated archaeols) into 2,3-diphytanylglycerophospholipids (saturated archaeols) in the biosynthesis of archaeal membrane lipids. Can fully reduce the unsaturated isoprenoid side chains of membrane phospholipids and glycolipids. Is also able to reduce the omega-position isoprene of dolichol phosphate. The chain is Digeranylgeranylglycerophospholipid reductase from Haloferax volcanii (strain ATCC 29605 / DSM 3757 / JCM 8879 / NBRC 14742 / NCIMB 2012 / VKM B-1768 / DS2) (Halobacterium volcanii).